Reading from the N-terminus, the 32-residue chain is Acatoxin 1 (32 aa).

3 disulfides stabilise this stretch: Cys1/Cys15, Cys8/Cys20, and Cys14/Cys26.

The protein resides in the secreted. Its subcellular location is the nematocyst. In terms of biological role, reversibly inhibits acid-sensing ion channels (ASIC) in rat dorsal root ganglia neurons. Reversibly inhibits voltage-gated potassium channels (Kv) in rat DRG neurons. This chain is Acatoxin 1, found in Anthopleura cascaia (Sea anemone).